A 510-amino-acid chain; its full sequence is Bifunctional purine biosynthesis protein PurH (510 aa).

The MGS-like domain occupies 1–142 (MRALISVSDK…KNFKDVLIVT (142 aa)).

This sequence belongs to the PurH family.

It catalyses the reaction (6R)-10-formyltetrahydrofolate + 5-amino-1-(5-phospho-beta-D-ribosyl)imidazole-4-carboxamide = 5-formamido-1-(5-phospho-D-ribosyl)imidazole-4-carboxamide + (6S)-5,6,7,8-tetrahydrofolate. The enzyme catalyses IMP + H2O = 5-formamido-1-(5-phospho-D-ribosyl)imidazole-4-carboxamide. The protein operates within purine metabolism; IMP biosynthesis via de novo pathway; 5-formamido-1-(5-phospho-D-ribosyl)imidazole-4-carboxamide from 5-amino-1-(5-phospho-D-ribosyl)imidazole-4-carboxamide (10-formyl THF route): step 1/1. It functions in the pathway purine metabolism; IMP biosynthesis via de novo pathway; IMP from 5-formamido-1-(5-phospho-D-ribosyl)imidazole-4-carboxamide: step 1/1. In Campylobacter curvus (strain 525.92), this protein is Bifunctional purine biosynthesis protein PurH.